The sequence spans 427 residues: Citrate synthase (427 aa).

Catalysis depends on residues histidine 306 and aspartate 363.

This sequence belongs to the citrate synthase family. In terms of assembly, homohexamer.

It carries out the reaction oxaloacetate + acetyl-CoA + H2O = citrate + CoA + H(+). The protein operates within carbohydrate metabolism; tricarboxylic acid cycle; isocitrate from oxaloacetate: step 1/2. Its activity is regulated as follows. Allosterically inhibited by NADH. The chain is Citrate synthase (gltA) from Salmonella typhimurium (strain LT2 / SGSC1412 / ATCC 700720).